The following is a 262-amino-acid chain: Capsid protein (262 aa).

The disordered stretch occupies residues 183–262; sequence APTIEAITRP…SHHRSPSPRK (80 aa). The Bipartite nuclear localization signal signature appears at 215 to 233; it reads RRRKVKTTVVYGRRRSKSR. 2 stretches are compositionally biased toward basic residues: residues 215–234 and 252–262; these read RRRK…KSRE and SSHHRSPSPRK.

The protein belongs to the avihepadnavirus core antigen family. As to quaternary structure, homodimerizes, then multimerizes.

Its subcellular location is the virion. It localises to the host cytoplasm. In terms of biological role, self assembles to form an icosahedral capsid. Most capsid appear to be large particles with an icosahedral symmetry of T=4 and consist of 240 copies of capsid protein, though a fraction forms smaller T=3 particles consisting of 180 capsid proteins. Entering capsid are transported along microtubules to the nucleus. Phosphorylation of the capsid is thought to induce exposure of nuclear localization signal in the C-terminal portion of the capsid protein that allows binding to the nuclear pore complex via the importin (karyopherin-) alpha and beta. Capsids are imported in intact form through the nuclear pore into the nuclear basket, where it probably binds NUP153. Only capsids that contain the mature viral genome can release the viral DNA and capsid protein into the nucleoplasm. Immature capsids get stucked in the basket. Capsids encapsulate the pre-genomic RNA and the P protein. Pre-genomic RNA is reverse transcribed into DNA while the capsid is still in the cytoplasm. The capsid can then either be directed to the nucleus, providing more genome for transcription, or bud through the endoplasmic reticulum to provide new virions. In Duck hepatitis B virus (isolate Shanghai/DHBVQCA34) (DHBV), this protein is Capsid protein (C).